Reading from the N-terminus, the 170-residue chain is Putative pre-16S rRNA nuclease (170 aa).

Residues 1-29 (MVAASHRSPDRPGDPEGLEPGTGRGRRLG) form a disordered region.

Belongs to the YqgF nuclease family.

It is found in the cytoplasm. Functionally, could be a nuclease involved in processing of the 5'-end of pre-16S rRNA. This is Putative pre-16S rRNA nuclease from Mycobacterium ulcerans (strain Agy99).